A 243-amino-acid chain; its full sequence is Adenylate kinase 4 (243 aa).

40–45 serves as a coordination point for ATP; the sequence is GSGKGT. An NMP region spans residues 60 to 89; sequence ATGDMLRAAVAAKTPLGVKAKEAMDKGELV. AMP is bound by residues T61, R66, 87–89, 115–118, and Q122; these read ELV and GFPR. The LID stretch occupies residues 156-193; that stretch reads GRWIHPSSGRSYHTKFAPPKVPGVDDVTGEPLIQRKDD. Position 157 (R157) interacts with ATP. AMP-binding residues include R190 and R201.

This sequence belongs to the adenylate kinase family.

It is found in the cytoplasm. The enzyme catalyses AMP + ATP = 2 ADP. Catalyzes the reversible transfer of the terminal phosphate group between ATP and AMP. Plays an important role in cellular energy homeostasis and in adenine nucleotide metabolism. This is Adenylate kinase 4 (ADK-B) from Oryza sativa subsp. japonica (Rice).